A 426-amino-acid polypeptide reads, in one-letter code: Enolase (426 aa).

Gln-162 serves as a coordination point for (2R)-2-phosphoglycerate. Glu-204 acts as the Proton donor in catalysis. Positions 241, 284, and 311 each coordinate Mg(2+). (2R)-2-phosphoglycerate-binding residues include Lys-336, Arg-365, Ser-366, and Lys-387. Lys-336 acts as the Proton acceptor in catalysis.

Belongs to the enolase family. As to quaternary structure, component of the RNA degradosome, a multiprotein complex involved in RNA processing and mRNA degradation. The cofactor is Mg(2+).

It is found in the cytoplasm. It localises to the secreted. The protein resides in the cell surface. The enzyme catalyses (2R)-2-phosphoglycerate = phosphoenolpyruvate + H2O. Its pathway is carbohydrate degradation; glycolysis; pyruvate from D-glyceraldehyde 3-phosphate: step 4/5. Functionally, catalyzes the reversible conversion of 2-phosphoglycerate (2-PG) into phosphoenolpyruvate (PEP). It is essential for the degradation of carbohydrates via glycolysis. This Thioalkalivibrio sulfidiphilus (strain HL-EbGR7) protein is Enolase.